Reading from the N-terminus, the 201-residue chain is Recombination protein RecR (201 aa).

The C4-type zinc-finger motif lies at 59 to 74 (CEICGNMDTENMCRIC). The Toprim domain maps to 82-177 (SIIAIVETVA…KISRLASGIP (96 aa)).

It belongs to the RecR family.

May play a role in DNA repair. It seems to be involved in an RecBC-independent recombinational process of DNA repair. It may act with RecF and RecO. This chain is Recombination protein RecR, found in Rickettsia conorii (strain ATCC VR-613 / Malish 7).